The primary structure comprises 268 residues: UDP-2,3-diacylglucosamine hydrolase (268 aa).

Asp-25, His-27, Asp-58, Asn-97, and His-132 together coordinate Mn(2+). Position 97-98 (97-98) interacts with substrate; sequence NR. Residues Asp-140, Ser-178, Glu-191, and His-222 each coordinate substrate. Mn(2+)-binding residues include His-222 and His-224.

The protein belongs to the LpxH family. Mn(2+) serves as cofactor.

The protein localises to the cell inner membrane. It carries out the reaction UDP-2-N,3-O-bis[(3R)-3-hydroxytetradecanoyl]-alpha-D-glucosamine + H2O = 2-N,3-O-bis[(3R)-3-hydroxytetradecanoyl]-alpha-D-glucosaminyl 1-phosphate + UMP + 2 H(+). It participates in glycolipid biosynthesis; lipid IV(A) biosynthesis; lipid IV(A) from (3R)-3-hydroxytetradecanoyl-[acyl-carrier-protein] and UDP-N-acetyl-alpha-D-glucosamine: step 4/6. Functionally, hydrolyzes the pyrophosphate bond of UDP-2,3-diacylglucosamine to yield 2,3-diacylglucosamine 1-phosphate (lipid X) and UMP by catalyzing the attack of water at the alpha-P atom. Involved in the biosynthesis of lipid A, a phosphorylated glycolipid that anchors the lipopolysaccharide to the outer membrane of the cell. The protein is UDP-2,3-diacylglucosamine hydrolase of Ralstonia nicotianae (strain ATCC BAA-1114 / GMI1000) (Ralstonia solanacearum).